Here is a 1612-residue protein sequence, read N- to C-terminus: Mediator of RNA polymerase II transcription subunit 12 (1612 aa).

Disordered stretches follow at residues 18–114 (AVYS…PSLS) and 1514–1547 (PVSI…QPAF). Residues 66–80 (VLEREPPAKRLKIDV) show a composition bias toward basic and acidic residues. 2 stretches are compositionally biased toward low complexity: residues 99–114 (SKST…PSLS) and 1518–1538 (PSPA…PTGG).

The protein belongs to the Mediator complex subunit 12 family. As to quaternary structure, component of the srb8-11 complex, which itself associates with the Mediator complex.

The protein resides in the nucleus. In terms of biological role, component of the srb8-11 complex. The srb8-11 complex is a regulatory module of the Mediator complex which is itself involved in regulation of basal and activated RNA polymerase II-dependent transcription. The srb8-11 complex may be involved in the transcriptional repression of a subset of genes regulated by Mediator. It may inhibit the association of the Mediator complex with RNA polymerase II to form the holoenzyme complex. The polypeptide is Mediator of RNA polymerase II transcription subunit 12 (srb8) (Neosartorya fischeri (strain ATCC 1020 / DSM 3700 / CBS 544.65 / FGSC A1164 / JCM 1740 / NRRL 181 / WB 181) (Aspergillus fischerianus)).